A 176-amino-acid chain; its full sequence is Protein tyrosine phosphatase PRL-1 (176 aa).

Residues 13-165 (GESDAVVFRF…YKPRHQEGNE (153 aa)) enclose the Tyrosine-protein phosphatase domain. A disulfide bridge connects residues Cys52 and Cys107. The Proton donor role is filled by Asp75. The active-site Phosphocysteine intermediate is Cys107. 109–113 (AGLGR) lines the substrate pocket. Cys173 carries the cysteine methyl ester modification. A lipid anchor (S-farnesyl cysteine) is attached at Cys173. Positions 174–176 (AVM) are cleaved as a propeptide — removed in mature form.

This sequence belongs to the protein-tyrosine phosphatase family.

The protein localises to the flagellar pocket. The catalysed reaction is O-phospho-L-tyrosyl-[protein] + H2O = L-tyrosyl-[protein] + phosphate. Activated in a reduced environment which promotes the reduction of the disulfide bond between the regulatory Cys-52 and the catalytic Cys-107 residues. Inhibited by sodium orthovanadate. Functionally, has protein tyrosine phosphatase activity. In Trypanosoma cruzi (strain CL Brener), this protein is Protein tyrosine phosphatase PRL-1.